The following is a 34-amino-acid chain: Ribonuclease PL1 (34 aa).

The N-linked (GlcNAc...) asparagine; partial glycan is linked to N4. The active-site Proton acceptor is the H15.

Belongs to the pancreatic ribonuclease family.

It is found in the lysosome. The catalysed reaction is an [RNA] containing cytidine + H2O = an [RNA]-3'-cytidine-3'-phosphate + a 5'-hydroxy-ribonucleotide-3'-[RNA].. It carries out the reaction an [RNA] containing uridine + H2O = an [RNA]-3'-uridine-3'-phosphate + a 5'-hydroxy-ribonucleotide-3'-[RNA].. This chain is Ribonuclease PL1, found in Sus scrofa (Pig).